Here is a 506-residue protein sequence, read N- to C-terminus: GTPase Der (506 aa).

2 consecutive EngA-type G domains span residues 3 to 166 and 218 to 391; these read PVVA…GEQL and IKIA…ACAT. GTP contacts are provided by residues 9–16, 56–60, 118–121, 224–231, 271–275, and 336–339; these read GRPNVGKS, DTGGI, NKTD, DTAGV, and NKWD. The 85-residue stretch at 392 to 476 folds into the KH-like domain; the sequence is QKNSTSMLTR…PIRIQFQEGN (85 aa).

It belongs to the TRAFAC class TrmE-Era-EngA-EngB-Septin-like GTPase superfamily. EngA (Der) GTPase family. In terms of assembly, associates with the 50S ribosomal subunit.

Functionally, GTPase that plays an essential role in the late steps of ribosome biogenesis. This is GTPase Der from Actinobacillus pleuropneumoniae serotype 7 (strain AP76).